We begin with the raw amino-acid sequence, 684 residues long: Protein EXECUTER 1, chloroplastic (684 aa).

The segment covering 1-31 (MPSLSTPPSQNLAFSPAASATSSRLTPSSKR) has biased composition (polar residues). Residues 1–46 (MPSLSTPPSQNLAFSPAASATSSRLTPSSKRSFYPHRLPDPTALCR) constitute a chloroplast transit peptide. Positions 1–66 (MPSLSTPPSQ…SSSSSDDNPR (66 aa)) are disordered. Over residues 48–61 (SSSSGSNSSSSSSS) the composition is skewed to low complexity. A UVR domain is found at 127 to 162 (DRLLSVLKSQLNRAIKREDYEDAARLKVAIAATATN). Residues 278–318 (TLTPGRFLTSPGRKEDTGNLAVESSEDEESDNSDDDSDLLE) are disordered. The span at 301 to 318 (SSEDEESDNSDDDSDLLE) shows a compositional bias: acidic residues.

The protein localises to the plastid. The protein resides in the chloroplast. Together with EX2, enables higher plants to perceive singlet oxygen as a stress signal in plastid that activates a genetically determined nuclear stress response program which triggers a programmed cell death (PCD). This transfer of singlet oxygen-induced stress-related signals from the plastid to the nucleus that triggers genetically controlled PCD pathway is unique to photosynthetic eukaryotes and operates under mild stress conditions, impeding photosystem II (PSII) without causing photooxidative damage of the plant. The chain is Protein EXECUTER 1, chloroplastic from Arabidopsis thaliana (Mouse-ear cress).